Here is a 528-residue protein sequence, read N- to C-terminus: Chromosomal replication initiator protein DnaA (528 aa).

The domain I, interacts with DnaA modulators stretch occupies residues methionine 1 to proline 104. A disordered region spans residues proline 95 to arginine 158. A compositionally biased stretch (basic and acidic residues) spans proline 104–glutamate 123. Residues proline 105–asparagine 187 form a domain II region. Residues threonine 149 to arginine 158 are compositionally biased toward acidic residues. A domain III, AAA+ region region spans residues serine 188–alanine 404. ATP contacts are provided by glycine 232, glycine 234, lysine 235, and threonine 236. Residues serine 405–arginine 528 are domain IV, binds dsDNA.

Belongs to the DnaA family. As to quaternary structure, oligomerizes as a right-handed, spiral filament on DNA at oriC.

It is found in the cytoplasm. Plays an essential role in the initiation and regulation of chromosomal replication. ATP-DnaA binds to the origin of replication (oriC) to initiate formation of the DNA replication initiation complex once per cell cycle. Binds the DnaA box (a 9 base pair repeat at the origin) and separates the double-stranded (ds)DNA. Forms a right-handed helical filament on oriC DNA; dsDNA binds to the exterior of the filament while single-stranded (ss)DNA is stabiized in the filament's interior. The ATP-DnaA-oriC complex binds and stabilizes one strand of the AT-rich DNA unwinding element (DUE), permitting loading of DNA polymerase. After initiation quickly degrades to an ADP-DnaA complex that is not apt for DNA replication. Binds acidic phospholipids. This is Chromosomal replication initiator protein DnaA from Rhodococcus jostii (strain RHA1).